The chain runs to 73 residues: Disintegrin barbourin (73 aa).

Positions 1–73 constitute a Disintegrin domain; it reads EAGEECDCGS…ADCPRNGLYG (73 aa). Disulfide bonds link C6–C21, C8–C16, C15–C38, C29–C35, C34–C59, and C47–C66. A Cell attachment site; atypical (KGD) motif is present at residues 51–53; sequence KGD.

This sequence belongs to the venom metalloproteinase (M12B) family. P-II subfamily. P-IIa sub-subfamily. As to quaternary structure, monomer. As to expression, expressed by the venom gland.

It localises to the secreted. Inhibitor of ligand binding to the integrins alpha-IIb/beta-3 (ITGA2B/ITGB3). Competition with fibrinogen for the RGD recognition sites on the alpha-IIb/beta-3 integrin results in the inhibition of platelet aggregation induced by ADP, thrombin, platelet-activating factor and collagen. The chain is Disintegrin barbourin from Sistrurus miliarius barbouri (Dusky pigmy rattlesnake).